We begin with the raw amino-acid sequence, 94 residues long: MARARGVVLGYRRGTNTQYPQHALVKLLLDDPRKAGLYVSGIAFYRDRYGNVYKGRVLRLHGRRGGVVVVKFNPPLPGQATGGVVEVVKAGGDG.

Belongs to the eukaryotic ribosomal protein eL33 family.

The chain is Large ribosomal subunit protein eL33 from Aeropyrum pernix (strain ATCC 700893 / DSM 11879 / JCM 9820 / NBRC 100138 / K1).